Here is a 228-residue protein sequence, read N- to C-terminus: MADS-box transcription factor 22 (228 aa).

The MADS-box domain maps to 1-61 (MARERREIKR…GKLSHFASSS (61 aa)). The 91-residue stretch at 86-176 (LNLEHSKYAH…RNQVSQISPA (91 aa)) folds into the K-box domain. Positions 189-217 (EGQSSESVMTALHSGSSQSQDNDDGSDVS) are disordered.

In terms of tissue distribution, expressed in palea and stamen primordia. Expressed in shoots and coleoptiles.

It localises to the nucleus. Its function is as follows. Probable transcription factor. May be required for spikelet (rice flower) development. Transcription factor that functions to support the MADS55 in its function as negative regulator of brassinosteroid signaling. In Oryza sativa subsp. japonica (Rice), this protein is MADS-box transcription factor 22 (MADS22).